Consider the following 188-residue polypeptide: MALKIAQELRAGNVFMIGNDPMVVLKTEYSRSGRNAAVVKMKYKNLLTGAPSESVFKADDKMDQIILDKKECTYSYFADPMYVFMDTDYNQYEVEADSMGDAIHYLEDGMAAEVTFYNEKAISVELPTTLVREIEYTEPAVKGDTSSGKVLKMAKIKGGFEIQVPLFCSTGDKIEIDTRTHEYRSRAN.

It belongs to the elongation factor P family.

Its subcellular location is the cytoplasm. Its pathway is protein biosynthesis; polypeptide chain elongation. Its function is as follows. Involved in peptide bond synthesis. Stimulates efficient translation and peptide-bond synthesis on native or reconstituted 70S ribosomes in vitro. Probably functions indirectly by altering the affinity of the ribosome for aminoacyl-tRNA, thus increasing their reactivity as acceptors for peptidyl transferase. The polypeptide is Elongation factor P (Ralstonia nicotianae (strain ATCC BAA-1114 / GMI1000) (Ralstonia solanacearum)).